We begin with the raw amino-acid sequence, 863 residues long: Dipeptidyl peptidase 9 (863 aa).

A disordered region spans residues 1-20 (MATTGTPTADRGDAAATDDP). Residue A2 is modified to N-acetylalanine. Active-site charge relay system residues include S730, D808, and H840. S730 is a Val-boroPro binding site.

This sequence belongs to the peptidase S9B family. DPPIV subfamily. In terms of assembly, homodimer. Forms a ternary complex with NLRP1, composed of a DPP9 homodimer, one full-length NLRP1 protein, and one cleaved C-terminus of NLRP1 (NACHT, LRR and PYD domains-containing protein 1, C-terminus). Forms a ternary complex with CARD8, composed of a DPP9 homodimer, one full-length NLRP1 protein, and one cleaved C-terminus of CARD8 (Caspase recruitment domain-containing protein 8, C-terminus). In the ternary complex, only one subunit of the DPP9 homodimer is bound to NLRP1 or CARD8. In terms of tissue distribution, ubiquitously expressed, with highest levels in liver, heart and muscle, and lowest levels in brain.

The protein localises to the cytoplasm. It is found in the cytosol. Its subcellular location is the nucleus. The enzyme catalyses Release of an N-terminal dipeptide, Xaa-Yaa-|-Zaa-, from a polypeptide, preferentially when Yaa is Pro, provided Zaa is neither Pro nor hydroxyproline.. Its activity is regulated as follows. Inhibited by the serine proteinase inhibitor 4-(2-aminoethyl)benzenesulphonyl fluoride (AEBSF), and by di-isopropylfluorophosphate. Inhibited by Val-boroPro (Talabostat, PT-100), a non-selective inhibitor, which triggers pyroptosis in monocytes and macrophages. Val-boroPro inhibits activity by binding to the active site, mimicking a substrate-bound state, thereby displacing the C-terminal fragment of NLRP1, leading to activation of the NLRP1 inflammasome. In contrast, Val-boroPro does not directly displaces CARD8: it acts by promoting degradation of the N-terminal part of CARD8, leading to indirect disruption of the ternary complex. Chemical inhibition of DPP9 by Val-boroPro in HIV-1-infected cells activates the CARD8 inflammasome, triggering cell death, offering a promising strategy for the elimination of HIV-1 reservoirs in people living with HIV-1. Its function is as follows. Dipeptidyl peptidase that cleaves off N-terminal dipeptides from proteins having a Pro or Ala residue at position 2. Acts as a key inhibitor of caspase-1-dependent monocyte and macrophage pyroptosis in resting cells by preventing activation of NLRP1 and CARD8. Sequesters the cleaved C-terminal part of NLRP1 and CARD8, which respectively constitute the active part of the NLRP1 and CARD8 inflammasomes, in a ternary complex, thereby preventing their oligomerization and activation. The dipeptidyl peptidase activity is required to suppress NLRP1 and CARD8; however, neither NLRP1 nor CARD8 are bona fide substrates of DPP9, suggesting the existence of substrate(s) required for NLRP1 and CARD8 inhibition. This is Dipeptidyl peptidase 9 from Homo sapiens (Human).